The sequence spans 214 residues: Phosphatidylserine decarboxylase proenzyme (214 aa).

S182 (schiff-base intermediate with substrate; via pyruvic acid) is an active-site residue. At S182 the chain carries Pyruvic acid (Ser); by autocatalysis.

The protein belongs to the phosphatidylserine decarboxylase family. PSD-A subfamily. Heterodimer of a large membrane-associated beta subunit and a small pyruvoyl-containing alpha subunit. Pyruvate is required as a cofactor. Is synthesized initially as an inactive proenzyme. Formation of the active enzyme involves a self-maturation process in which the active site pyruvoyl group is generated from an internal serine residue via an autocatalytic post-translational modification. Two non-identical subunits are generated from the proenzyme in this reaction, and the pyruvate is formed at the N-terminus of the alpha chain, which is derived from the carboxyl end of the proenzyme. The post-translation cleavage follows an unusual pathway, termed non-hydrolytic serinolysis, in which the side chain hydroxyl group of the serine supplies its oxygen atom to form the C-terminus of the beta chain, while the remainder of the serine residue undergoes an oxidative deamination to produce ammonia and the pyruvoyl prosthetic group on the alpha chain.

The protein resides in the cell membrane. It carries out the reaction a 1,2-diacyl-sn-glycero-3-phospho-L-serine + H(+) = a 1,2-diacyl-sn-glycero-3-phosphoethanolamine + CO2. It functions in the pathway phospholipid metabolism; phosphatidylethanolamine biosynthesis; phosphatidylethanolamine from CDP-diacylglycerol: step 2/2. In terms of biological role, catalyzes the formation of phosphatidylethanolamine (PtdEtn) from phosphatidylserine (PtdSer). The chain is Phosphatidylserine decarboxylase proenzyme from Burkholderia multivorans (strain ATCC 17616 / 249).